The sequence spans 351 residues: Phospho-N-acetylmuramoyl-pentapeptide-transferase (351 aa).

A run of 10 helical transmembrane segments spans residues 17–37 (TAYA…FIIS), 61–83 (MGIP…FFWI), 88–105 (IYFL…CLGF), 130–150 (ILFS…HVSI), 158–178 (SLKL…LISA), 190–210 (GLAI…AYLT), 230–250 (LVIF…FNAY), 254–274 (IMMG…VALI), 279–299 (ILFA…IIQV), and 328–348 (QVVI…LSTI).

The protein belongs to the glycosyltransferase 4 family. MraY subfamily. The cofactor is Mg(2+).

The protein resides in the cell inner membrane. It carries out the reaction UDP-N-acetyl-alpha-D-muramoyl-L-alanyl-gamma-D-glutamyl-meso-2,6-diaminopimeloyl-D-alanyl-D-alanine + di-trans,octa-cis-undecaprenyl phosphate = di-trans,octa-cis-undecaprenyl diphospho-N-acetyl-alpha-D-muramoyl-L-alanyl-D-glutamyl-meso-2,6-diaminopimeloyl-D-alanyl-D-alanine + UMP. The protein operates within cell wall biogenesis; peptidoglycan biosynthesis. In terms of biological role, catalyzes the initial step of the lipid cycle reactions in the biosynthesis of the cell wall peptidoglycan: transfers peptidoglycan precursor phospho-MurNAc-pentapeptide from UDP-MurNAc-pentapeptide onto the lipid carrier undecaprenyl phosphate, yielding undecaprenyl-pyrophosphoryl-MurNAc-pentapeptide, known as lipid I. The sequence is that of Phospho-N-acetylmuramoyl-pentapeptide-transferase from Borrelia recurrentis (strain A1).